The primary structure comprises 230 residues: Uracil-DNA glycosylase (230 aa).

Residue Asp-70 is the Proton acceptor of the active site.

Belongs to the uracil-DNA glycosylase (UDG) superfamily. UNG family.

It localises to the cytoplasm. The enzyme catalyses Hydrolyzes single-stranded DNA or mismatched double-stranded DNA and polynucleotides, releasing free uracil.. Its function is as follows. Excises uracil residues from the DNA which can arise as a result of misincorporation of dUMP residues by DNA polymerase or due to deamination of cytosine. The polypeptide is Uracil-DNA glycosylase (Pseudomonas fluorescens (strain SBW25)).